A 328-amino-acid chain; its full sequence is Probable GDP-L-fucose synthase 1 (328 aa).

Position 25-31 (25-31 (GHRGLVG)) interacts with NADP(+). The active-site Proton donor/acceptor is the Tyr152. NADP(+) contacts are provided by residues Lys156, 179–182 (PTNL), and His195. Substrate-binding residues include Arg203, Trp218, Arg225, and Asp285.

Belongs to the NAD(P)-dependent epimerase/dehydratase family. Fucose synthase subfamily. Homodimer.

The enzyme catalyses GDP-beta-L-fucose + NADP(+) = GDP-4-dehydro-alpha-D-rhamnose + NADPH + H(+). Its pathway is nucleotide-sugar biosynthesis; GDP-L-fucose biosynthesis via de novo pathway; GDP-L-fucose from GDP-alpha-D-mannose: step 2/2. In terms of biological role, catalyzes the two-step NADP-dependent conversion of GDP-4-dehydro-6-deoxy-D-mannose to GDP-fucose, involving an epimerase and a reductase reaction. The protein is Probable GDP-L-fucose synthase 1 of Oryza sativa subsp. japonica (Rice).